A 192-amino-acid polypeptide reads, in one-letter code: Adenylate kinase (192 aa).

12 to 17 (GSGKTT) provides a ligand contact to ATP. Residues 34 to 63 (STGDLLRAEVASGSELGKTIDSFISKGNLV) are NMP. AMP contacts are provided by residues Thr-35, Arg-40, 61 to 63 (NLV), 88 to 91 (GYPR), and Gln-95. The segment at 130 to 136 (GRNRGAD) is LID. Arg-131 provides a ligand contact to ATP. Residues Arg-133 and Arg-145 each coordinate AMP. Residue Arg-173 participates in ATP binding.

Belongs to the adenylate kinase family. In terms of assembly, monomer.

It localises to the cytoplasm. It catalyses the reaction AMP + ATP = 2 ADP. The protein operates within purine metabolism; AMP biosynthesis via salvage pathway; AMP from ADP: step 1/1. Functionally, catalyzes the reversible transfer of the terminal phosphate group between ATP and AMP. Plays an important role in cellular energy homeostasis and in adenine nucleotide metabolism. The polypeptide is Adenylate kinase (Campylobacter jejuni subsp. jejuni serotype O:6 (strain 81116 / NCTC 11828)).